The sequence spans 337 residues: METEPPPLEERRRLQEELSEFVESCCRTLEEVTASLGWSLDQLDPGDEAEAEDEIAICPYDSNHRMPKSSLTKHMESCRLRKLGYTKEEENEMYNPTFFYENLKIPSVTLNKDSQFQIIKQARTTAGKDGDCYSQRMYSSVPVEVPLNHKRSVCDLTQTDRLALYDFVIEETKKKRSGPQVIENDSDLFVDLAAKVNQDNSRKSPKSYLEILAEVRDYKRRRQSYRAKNVHITKKSYTEVIRDVIKVHMEELSSHWQEEQGRAGDAAEKNEERRSASVDSRQSGGSYLDVESSRHRRARSRSPHKRKRNKDKSSESRRRKERDGERHHSHKRRKQKI.

The CHHC U11-48K-type zinc-finger motif lies at 55–82 (IAICPYDSNHRMPKSSLTKHMESCRLRK). 4 residues coordinate Zn(2+): Cys58, His64, His74, and Cys78. Glycyl lysine isopeptide (Lys-Gly) (interchain with G-Cter in SUMO2) cross-links involve residues Lys87 and Lys104. Positions 255–276 (HWQEEQGRAGDAAEKNEERRSA) are enriched in basic and acidic residues. The tract at residues 255 to 337 (HWQEEQGRAG…HSHKRRKQKI (83 aa)) is disordered. The span at 294–310 (RHRRARSRSPHKRKRNK) shows a compositional bias: basic residues. A compositionally biased stretch (basic and acidic residues) spans 311–326 (DKSSESRRRKERDGER). Over residues 327–337 (HHSHKRRKQKI) the composition is skewed to basic residues.

Component of the U11/U12 snRNPs that are part of the U12-type spliceosome. Not found in the major spliceosome.

It is found in the nucleus. Its function is as follows. Likely involved in U12-type 5' splice site recognition. This Mus musculus (Mouse) protein is U11/U12 small nuclear ribonucleoprotein 48 kDa protein (Snrnp48).